An 81-amino-acid chain; its full sequence is U1-sicaritoxin-Li1c (81 aa).

A propeptide spanning residues 1-16 (ARGDAEKWESLISEER) is cleaved from the precursor. Cystine bridges form between Cys-18–Cys-35, Cys-26–Cys-40, Cys-34–Cys-53, and Cys-42–Cys-51. Arg-62 carries the arginine amide modification. A propeptide spanning residues 66 to 81 (ALMLDPETHRLLFSED) is cleaved from the precursor.

The protein belongs to the neurotoxin 28 (Litx) family. As to expression, expressed by the venom gland.

The protein localises to the secreted. Functionally, toxin active against insects (S.frugiperda larvae). May act on sodium (Nav) or calcium (Cav) channels. In Loxosceles intermedia (Brown spider), this protein is U1-sicaritoxin-Li1c.